Here is a 29-residue protein sequence, read N- to C-terminus: MGYDINXXLAQMXKGGVIMXXXXXXQAVI.

It belongs to the PdxS/SNZ family. As to quaternary structure, in the presence of PdxT, forms a dodecamer of heterodimers.

It carries out the reaction aldehydo-D-ribose 5-phosphate + D-glyceraldehyde 3-phosphate + L-glutamine = pyridoxal 5'-phosphate + L-glutamate + phosphate + 3 H2O + H(+). Its pathway is cofactor biosynthesis; pyridoxal 5'-phosphate biosynthesis. Its function is as follows. Catalyzes the formation of pyridoxal 5'-phosphate from ribose 5-phosphate (RBP), glyceraldehyde 3-phosphate (G3P) and ammonia. The ammonia is provided by the PdxT subunit. Can also use ribulose 5-phosphate and dihydroxyacetone phosphate as substrates, resulting from enzyme-catalyzed isomerization of RBP and G3P, respectively. The protein is Pyridoxal 5'-phosphate synthase subunit PdxS of Clostridium pasteurianum.